Here is a 457-residue protein sequence, read N- to C-terminus: Hydrogenobyrinate a,c-diamide synthase (457 aa).

The 187-residue stretch at 255 to 441 (TVAIAAGRAF…LHTHPAATPG (187 aa)) folds into the GATase cobBQ-type domain. Catalysis depends on cysteine 337, which acts as the Nucleophile.

Belongs to the CobB/CbiA family. It depends on Mg(2+) as a cofactor.

The enzyme catalyses hydrogenobyrinate + 2 L-glutamine + 2 ATP + 2 H2O = hydrogenobyrinate a,c-diamide + 2 L-glutamate + 2 ADP + 2 phosphate + 2 H(+). It functions in the pathway cofactor biosynthesis; adenosylcobalamin biosynthesis; cob(II)yrinate a,c-diamide from precorrin-2 (aerobic route): step 9/10. Functionally, catalyzes the ATP-dependent amidation of the two carboxylate groups at positions a and c of hydrogenobyrinate, using either L-glutamine or ammonia as the nitrogen source. In Mycobacterium bovis (strain ATCC BAA-935 / AF2122/97), this protein is Hydrogenobyrinate a,c-diamide synthase.